Consider the following 875-residue polypeptide: Peptidyl-glycine alpha-amidating monooxygenase B (875 aa).

The signal sequence occupies residues Met1–Arg39. Residues Met3 to Gln394 form a peptidylglycine alpha-hydroxylating monooxygenase region. Residues Ser40 to Gly763 are Intragranular-facing. Cystine bridges form between Cys45–Cys184, Cys79–Cys124, Cys112–Cys129, Cys225–Cys332, and Cys291–Cys313. His105 and His106 together coordinate Cu(2+). Cu(2+) contacts are provided by His170, His240, His242, and Met312. Residues Asp395 to Val716 form a peptidyl-alpha-hydroxyglycine alpha-amidating lyase region. Arg430 serves as a coordination point for a protein. Asn465 carries an N-linked (GlcNAc...) asparagine glycan. NHL repeat units lie at residues Ser467–Glu508, Leu516–Asn561, and Gly569–Lys613. 2 disulfide bridges follow: Cys530/Cys551 and Cys598/Cys609. Tyr550 and Arg602 together coordinate a protein. N-linked (GlcNAc...) asparagine glycosylation is present at Asn662. The stretch at Gly666–Ser709 is one NHL 4 repeat. A disordered region spans residues His735 to Ser755. Asn743 carries N-linked (GlcNAc...) asparagine glycosylation. A compositionally biased stretch (polar residues) spans Asn743 to Ser755. A helical membrane pass occupies residues Val764 to Ile787. At Arg788–Ser875 the chain is on the cytoplasmic side. Residues Lys837–Ser875 form a disordered region. Positions Glu850–Tyr864 are enriched in acidic residues.

It in the C-terminal section; belongs to the peptidyl-alpha-hydroxyglycine alpha-amidating lyase family. The protein in the N-terminal section; belongs to the copper type II ascorbate-dependent monooxygenase family. As to quaternary structure, monomer. Zn(2+) is required as a cofactor. The cofactor is Cu(2+).

It is found in the cytoplasmic vesicle. The protein resides in the secretory vesicle membrane. The catalysed reaction is a [peptide]-C-terminal glycine + 2 L-ascorbate + O2 = a [peptide]-C-terminal (2S)-2-hydroxyglycine + 2 monodehydro-L-ascorbate radical + H2O. It catalyses the reaction a [peptide]-C-terminal (2S)-2-hydroxyglycine = a [peptide]-C-terminal amide + glyoxylate. Bifunctional enzyme that catalyzes amidation of the C-terminus of proteins. Alpha-amidation is present at the C-terminus of many endocrine hormones and neuropeptides and is required for their activity. C-terminal amidation also takes place in response to protein fragmentation triggered by oxidative stress, promoting degradation of amidated protein fragments by the proteasome. Alpha-amidation involves two sequential reactions, both of which are catalyzed by separate catalytic domains of the enzyme. The first step, catalyzed by peptidyl alpha-hydroxylating monooxygenase (PHM) domain, is the copper-, ascorbate-, and O2- dependent stereospecific hydroxylation (with S stereochemistry) at the alpha-carbon (C-alpha) of the C-terminal glycine of the peptidylglycine substrate. The second step, catalyzed by the peptidylglycine amidoglycolate lyase (PAL) domain, is the zinc-dependent cleavage of the N-C-alpha bond, producing the alpha-amidated peptide and glyoxylate. The sequence is that of Peptidyl-glycine alpha-amidating monooxygenase B (pam-b) from Xenopus laevis (African clawed frog).